A 164-amino-acid polypeptide reads, in one-letter code: 6,7-dimethyl-8-ribityllumazine synthase (164 aa).

5-amino-6-(D-ribitylamino)uracil-binding positions include Tyr30, 61–63 (ALE), and 85–87 (CVI). Residue 90-91 (ET) coordinates (2S)-2-hydroxy-3-oxobutyl phosphate. Catalysis depends on His93, which acts as the Proton donor. Asn118 serves as a coordination point for 5-amino-6-(D-ribitylamino)uracil. A (2S)-2-hydroxy-3-oxobutyl phosphate-binding site is contributed by Arg132.

This sequence belongs to the DMRL synthase family.

The catalysed reaction is (2S)-2-hydroxy-3-oxobutyl phosphate + 5-amino-6-(D-ribitylamino)uracil = 6,7-dimethyl-8-(1-D-ribityl)lumazine + phosphate + 2 H2O + H(+). It participates in cofactor biosynthesis; riboflavin biosynthesis; riboflavin from 2-hydroxy-3-oxobutyl phosphate and 5-amino-6-(D-ribitylamino)uracil: step 1/2. Its function is as follows. Catalyzes the formation of 6,7-dimethyl-8-ribityllumazine by condensation of 5-amino-6-(D-ribitylamino)uracil with 3,4-dihydroxy-2-butanone 4-phosphate. This is the penultimate step in the biosynthesis of riboflavin. The sequence is that of 6,7-dimethyl-8-ribityllumazine synthase from Methylobacterium radiotolerans (strain ATCC 27329 / DSM 1819 / JCM 2831 / NBRC 15690 / NCIMB 10815 / 0-1).